The sequence spans 511 residues: ATP synthase subunit alpha (511 aa).

169-176 is an ATP binding site; that stretch reads GDRQTGKT.

The protein belongs to the ATPase alpha/beta chains family. F-type ATPases have 2 components, CF(1) - the catalytic core - and CF(0) - the membrane proton channel. CF(1) has five subunits: alpha(3), beta(3), gamma(1), delta(1), epsilon(1). CF(0) has three main subunits: a(1), b(2) and c(9-12). The alpha and beta chains form an alternating ring which encloses part of the gamma chain. CF(1) is attached to CF(0) by a central stalk formed by the gamma and epsilon chains, while a peripheral stalk is formed by the delta and b chains.

It is found in the cell inner membrane. It carries out the reaction ATP + H2O + 4 H(+)(in) = ADP + phosphate + 5 H(+)(out). Its function is as follows. Produces ATP from ADP in the presence of a proton gradient across the membrane. The alpha chain is a regulatory subunit. The protein is ATP synthase subunit alpha of Bartonella bacilliformis (strain ATCC 35685 / KC583 / Herrer 020/F12,63).